The sequence spans 840 residues: Protein translocase subunit SecA (840 aa).

ATP-binding positions include Q85, 103-107, and D492; that span reads GEGKT. Positions 787–821 are disordered; the sequence is QRERVAKETGASHGGDSQEIKKKPVKKEPKVGRND. Positions 802–819 are enriched in basic and acidic residues; that stretch reads DSQEIKKKPVKKEPKVGR. Residues C823, C825, C834, and C835 each coordinate Zn(2+).

It belongs to the SecA family. Monomer and homodimer. Part of the essential Sec protein translocation apparatus which comprises SecA, SecYEG and auxiliary proteins SecDF. Other proteins may also be involved. Zn(2+) serves as cofactor.

It is found in the cell membrane. The protein localises to the cytoplasm. The catalysed reaction is ATP + H2O + cellular proteinSide 1 = ADP + phosphate + cellular proteinSide 2.. Part of the Sec protein translocase complex. Interacts with the SecYEG preprotein conducting channel. Has a central role in coupling the hydrolysis of ATP to the transfer of proteins into and across the cell membrane, serving as an ATP-driven molecular motor driving the stepwise translocation of polypeptide chains across the membrane. This chain is Protein translocase subunit SecA, found in Clostridium perfringens (strain 13 / Type A).